A 98-amino-acid polypeptide reads, in one-letter code: Keratin, high sulfur matrix protein, IIIB4 (98 aa).

Residue A1 is modified to N-acetylalanine.

Belongs to the KRTAP type 3 family. As to quaternary structure, interacts with wool keratins. As to expression, wool.

In the wool cortex, wool keratin intermediate filaments are embedded in an interfilamentous matrix, consisting of hair keratin-associated proteins (KRTAP), which are essential for the formation of a rigid and resistant wool shaft through their extensive disulfide bond cross-linking with abundant cysteine residues of wool keratins. The matrix proteins include the high-sulfur and high-glycine-tyrosine keratins. The polypeptide is Keratin, high sulfur matrix protein, IIIB4 (Ovis aries (Sheep)).